Reading from the N-terminus, the 201-residue chain is Retinol-binding protein 4 (201 aa).

The first 18 residues, 1–18 (MKWVWALLLLAALGSGRA), serve as a signal peptide directing secretion. 3 disulfides stabilise this stretch: cysteine 22/cysteine 178, cysteine 88/cysteine 192, and cysteine 138/cysteine 147. Glutamine 116 lines the substrate pocket. At arginine 139 the chain carries Omega-N-methylarginine.

The protein belongs to the calycin superfamily. Lipocalin family. In terms of assembly, interacts with TTR. Interaction with TTR prevents its loss by filtration through the kidney glomeruli. Interacts with STRA6. As to expression, detected in blood plasma and in urine (at protein level).

Its subcellular location is the secreted. Retinol-binding protein that mediates retinol transport in blood plasma. Delivers retinol from the liver stores to the peripheral tissues. Transfers the bound all-trans retinol to STRA6, that then facilitates retinol transport across the cell membrane. In Homo sapiens (Human), this protein is Retinol-binding protein 4 (RBP4).